Here is a 501-residue protein sequence, read N- to C-terminus: Aldehyde dehydrogenase, cytosolic 1 (501 aa).

Ser-2 is subject to N-acetylserine. Lys-91 and Lys-128 each carry N6-acetyllysine. 246–251 (GSTEVG) provides a ligand contact to NAD(+). The residue at position 252 (Lys-252) is an N6-acetyllysine. The active-site Proton acceptor is the Glu-269. Cys-303 acts as the Nucleophile in catalysis. Lys-353, Lys-367, and Lys-410 each carry N6-acetyllysine. The residue at position 413 (Ser-413) is a Phosphoserine. Residues Lys-419, Lys-435, and Lys-495 each carry the N6-acetyllysine modification.

The protein belongs to the aldehyde dehydrogenase family. As to quaternary structure, homotetramer. As to expression, very low levels in lung and liver.

Its subcellular location is the cytoplasm. The catalysed reaction is an aldehyde + NAD(+) + H2O = a carboxylate + NADH + 2 H(+). The protein operates within alcohol metabolism; ethanol degradation; acetate from ethanol: step 2/2. Functionally, can oxidize benzaldehyde, propionaldehyde and acetaldehyde. No detectable activity with retinal. The sequence is that of Aldehyde dehydrogenase, cytosolic 1 (Aldh1a7) from Rattus norvegicus (Rat).